The primary structure comprises 341 residues: S-adenosylmethionine:tRNA ribosyltransferase-isomerase (341 aa).

Belongs to the QueA family. Monomer.

It is found in the cytoplasm. It carries out the reaction 7-aminomethyl-7-carbaguanosine(34) in tRNA + S-adenosyl-L-methionine = epoxyqueuosine(34) in tRNA + adenine + L-methionine + 2 H(+). Its pathway is tRNA modification; tRNA-queuosine biosynthesis. Transfers and isomerizes the ribose moiety from AdoMet to the 7-aminomethyl group of 7-deazaguanine (preQ1-tRNA) to give epoxyqueuosine (oQ-tRNA). This is S-adenosylmethionine:tRNA ribosyltransferase-isomerase from Staphylococcus haemolyticus (strain JCSC1435).